The primary structure comprises 283 residues: Pantothenate synthetase (283 aa).

An ATP-binding site is contributed by 31 to 38; it reads MGALHDGH. The active-site Proton donor is the His38. Gln62 contributes to the (R)-pantoate binding site. Gln62 is a binding site for beta-alanine. Residue 148–151 participates in ATP binding; that stretch reads GKKD. Gln154 contacts (R)-pantoate. Residues Val177 and 185–188 contribute to the ATP site; that span reads KSSR.

It belongs to the pantothenate synthetase family. As to quaternary structure, homodimer.

It is found in the cytoplasm. It carries out the reaction (R)-pantoate + beta-alanine + ATP = (R)-pantothenate + AMP + diphosphate + H(+). It participates in cofactor biosynthesis; (R)-pantothenate biosynthesis; (R)-pantothenate from (R)-pantoate and beta-alanine: step 1/1. Catalyzes the condensation of pantoate with beta-alanine in an ATP-dependent reaction via a pantoyl-adenylate intermediate. This is Pantothenate synthetase from Staphylococcus aureus (strain Mu3 / ATCC 700698).